Reading from the N-terminus, the 377-residue chain is NAC domain-containing protein 76 (377 aa).

Residues Val10 to Lys159 enclose the NAC domain. The DNA-binding element occupies Ile110 to Gln165. The tract at residues Gly312–Thr347 is disordered. The segment covering Gly318 to Asn336 has biased composition (basic and acidic residues). Residues Asn337–Thr347 are compositionally biased toward polar residues.

This sequence belongs to the plant vascular related NAC-domain protein family. In terms of assembly, interacts with NAC030/VND7. Detected in root protoxylem and metaxylem poles and in vessels of protoxylems, outermost metaxylems, inner metaxylems, shoots and hypocotyls. Expressed in roots, hypocotyls, cotyledons and leaves. Present in developing xylems. Specifically expressed in vessels but not in interfascicular fibers in stems.

The protein localises to the nucleus. Transcription activator that binds to the secondary wall NAC binding element (SNBE), 5'-(T/A)NN(C/T)(T/C/G)TNNNNNNNA(A/C)GN(A/C/T)(A/T)-3', in the promoter of target genes. Involved in xylem formation by promoting the expression of secondary wall-associated transcription factors and of genes involved in secondary wall biosynthesis and programmed cell death, genes driven by the secondary wall NAC binding element (SNBE). Triggers thickening of secondary walls. In Arabidopsis thaliana (Mouse-ear cress), this protein is NAC domain-containing protein 76.